A 331-amino-acid chain; its full sequence is Oxygen-evolving enhancer protein 1-2, chloroplastic (331 aa).

The transit peptide at 1–57 (MATSLQAAATFLQPAKIAASPSRNVHLRSNQTVGKSFGLDSSQARLTCSLHSDLKDF) directs the protein to the chloroplast. A thylakoid-targeting transit peptide spans 58–84 (AGKCSDAAKIAGFALATSALVVSGAGA).

It belongs to the PsbO family.

The protein localises to the plastid. It localises to the chloroplast thylakoid membrane. Stabilizes the manganese cluster which is the primary site of water splitting. Regulates dephosphorylation and turnover of the PSII reaction center D1 protein. This is Oxygen-evolving enhancer protein 1-2, chloroplastic (PSBO2) from Arabidopsis thaliana (Mouse-ear cress).